The sequence spans 533 residues: Peptide chain release factor 3 (533 aa).

A tr-type G domain is found at 9-284 (ARRRTFAIIS…ALCELSPPPL (276 aa)). Residues 18–25 (SHPDAGKT), 95–99 (DTPGH), and 149–152 (NKLD) each bind GTP.

This sequence belongs to the TRAFAC class translation factor GTPase superfamily. Classic translation factor GTPase family. PrfC subfamily.

The protein localises to the cytoplasm. In terms of biological role, increases the formation of ribosomal termination complexes and stimulates activities of RF-1 and RF-2. It binds guanine nucleotides and has strong preference for UGA stop codons. It may interact directly with the ribosome. The stimulation of RF-1 and RF-2 is significantly reduced by GTP and GDP, but not by GMP. This Cupriavidus taiwanensis (strain DSM 17343 / BCRC 17206 / CCUG 44338 / CIP 107171 / LMG 19424 / R1) (Ralstonia taiwanensis (strain LMG 19424)) protein is Peptide chain release factor 3.